We begin with the raw amino-acid sequence, 253 residues long: 5'-nucleotidase SurE (253 aa).

D8, D9, S39, and N91 together coordinate a divalent metal cation.

This sequence belongs to the SurE nucleotidase family. Requires a divalent metal cation as cofactor.

It is found in the cytoplasm. It catalyses the reaction a ribonucleoside 5'-phosphate + H2O = a ribonucleoside + phosphate. In terms of biological role, nucleotidase that shows phosphatase activity on nucleoside 5'-monophosphates. This is 5'-nucleotidase SurE from Leptothrix cholodnii (strain ATCC 51168 / LMG 8142 / SP-6) (Leptothrix discophora (strain SP-6)).